Reading from the N-terminus, the 186-residue chain is Peptide deformylase (186 aa).

Fe cation contacts are provided by Cys-99 and His-141. Glu-142 is a catalytic residue. His-145 provides a ligand contact to Fe cation.

This sequence belongs to the polypeptide deformylase family. The cofactor is Fe(2+).

The enzyme catalyses N-terminal N-formyl-L-methionyl-[peptide] + H2O = N-terminal L-methionyl-[peptide] + formate. Removes the formyl group from the N-terminal Met of newly synthesized proteins. Requires at least a dipeptide for an efficient rate of reaction. N-terminal L-methionine is a prerequisite for activity but the enzyme has broad specificity at other positions. In Chlamydia caviae (strain ATCC VR-813 / DSM 19441 / 03DC25 / GPIC) (Chlamydophila caviae), this protein is Peptide deformylase.